A 352-amino-acid polypeptide reads, in one-letter code: A-type ATP synthase subunit C (352 aa).

It belongs to the V-ATPase V0D/AC39 subunit family. Has multiple subunits with at least A(3), B(3), C, D, E, F, H, I and proteolipid K(x).

It localises to the cell membrane. Functionally, component of the A-type ATP synthase that produces ATP from ADP in the presence of a proton gradient across the membrane. The polypeptide is A-type ATP synthase subunit C (Halobacterium salinarum (strain ATCC 29341 / DSM 671 / R1)).